We begin with the raw amino-acid sequence, 212 residues long: Mediator of RNA polymerase II transcription subunit 20 (212 aa).

Belongs to the Mediator complex subunit 20 family. Component of the Mediator complex, which is composed of MED1, MED4, MED6, MED7, MED8, MED9, MED10, MED11, MED12, MED13, MED13L, MED14, MED15, MED16, MED17, MED18, MED19, MED20, MED21, MED22, MED23, MED24, MED25, MED26, MED27, MED29, MED30, MED31, CCNC, CDK8 and CDC2L6/CDK11. The MED12, MED13, CCNC and CDK8 subunits form a distinct module termed the CDK8 module. Mediator containing the CDK8 module is less active than Mediator lacking this module in supporting transcriptional activation. Individual preparations of the Mediator complex lacking one or more distinct subunits have been variously termed ARC, CRSP, DRIP, PC2, SMCC and TRAP. Interacts with PPARG.

Its subcellular location is the nucleus. Functionally, component of the Mediator complex, a coactivator involved in the regulated transcription of nearly all RNA polymerase II-dependent genes. Mediator functions as a bridge to convey information from gene-specific regulatory proteins to the basal RNA polymerase II transcription machinery. Mediator is recruited to promoters by direct interactions with regulatory proteins and serves as a scaffold for the assembly of a functional preinitiation complex with RNA polymerase II and the general transcription factors. In Rattus norvegicus (Rat), this protein is Mediator of RNA polymerase II transcription subunit 20 (Med20).